The sequence spans 223 residues: Cytidylate kinase (223 aa).

10–18 (GPASSGKST) contributes to the ATP binding site.

It belongs to the cytidylate kinase family. Type 1 subfamily.

It is found in the cytoplasm. It carries out the reaction CMP + ATP = CDP + ADP. The enzyme catalyses dCMP + ATP = dCDP + ADP. This is Cytidylate kinase from Streptococcus pneumoniae (strain Taiwan19F-14).